A 71-amino-acid chain; its full sequence is uncharacterized protein (71 aa).

The N-terminal stretch at 1–23 (MTLLIILILKYLLCLENLKNISL) is a signal peptide. N20, N28, N44, and N50 each carry an N-linked (GlcNAc...) asparagine glycan.

The protein resides in the secreted. This is an uncharacterized protein from Dictyostelium discoideum (Social amoeba).